Here is a 397-residue protein sequence, read N- to C-terminus: Ribosomal RNA large subunit methyltransferase I (397 aa).

Residues 2–82 (TTSIYLVKGR…EVINVDFFVK (81 aa)) enclose the PUA domain.

This sequence belongs to the methyltransferase superfamily. RlmI family.

It is found in the cytoplasm. It carries out the reaction cytidine(1962) in 23S rRNA + S-adenosyl-L-methionine = 5-methylcytidine(1962) in 23S rRNA + S-adenosyl-L-homocysteine + H(+). Functionally, specifically methylates the cytosine at position 1962 (m5C1962) of 23S rRNA. The protein is Ribosomal RNA large subunit methyltransferase I of Photobacterium profundum (strain SS9).